We begin with the raw amino-acid sequence, 450 residues long: ATP-dependent protease ATPase subunit HslU (450 aa).

Residues Val-27, 69 to 74 (GVGKTE), Asp-263, Glu-328, and Arg-400 each bind ATP.

The protein belongs to the ClpX chaperone family. HslU subfamily. In terms of assembly, a double ring-shaped homohexamer of HslV is capped on each side by a ring-shaped HslU homohexamer. The assembly of the HslU/HslV complex is dependent on binding of ATP.

It is found in the cytoplasm. Its function is as follows. ATPase subunit of a proteasome-like degradation complex; this subunit has chaperone activity. The binding of ATP and its subsequent hydrolysis by HslU are essential for unfolding of protein substrates subsequently hydrolyzed by HslV. HslU recognizes the N-terminal part of its protein substrates and unfolds these before they are guided to HslV for hydrolysis. The sequence is that of ATP-dependent protease ATPase subunit HslU from Aquifex aeolicus (strain VF5).